The primary structure comprises 334 residues: Probable tRNA pseudouridine synthase B (334 aa).

Catalysis depends on aspartate 82, which acts as the Nucleophile. Residues leucine 250–methionine 325 form the PUA domain.

Belongs to the pseudouridine synthase TruB family. Type 2 subfamily.

The catalysed reaction is uridine(55) in tRNA = pseudouridine(55) in tRNA. Functionally, could be responsible for synthesis of pseudouridine from uracil-55 in the psi GC loop of transfer RNAs. The sequence is that of Probable tRNA pseudouridine synthase B from Pyrococcus horikoshii (strain ATCC 700860 / DSM 12428 / JCM 9974 / NBRC 100139 / OT-3).